The primary structure comprises 285 residues: Phycobilisome 31.6 kDa linker polypeptide, phycocyanin-associated, rod (285 aa).

In terms of domain architecture, PBS-linker spans 1–180; the sequence is MPITTAASRL…LYRGYATSDR (180 aa).

It belongs to the phycobilisome linker protein family.

Its subcellular location is the cellular thylakoid membrane. Its function is as follows. Rod linker protein, associated with phycocyanin. Linker polypeptides determine the state of aggregation and the location of the disk-shaped phycobiliprotein units within the phycobilisome and modulate their spectroscopic properties in order to mediate a directed and optimal energy transfer. The sequence is that of Phycobilisome 31.6 kDa linker polypeptide, phycocyanin-associated, rod (cpcI3) from Microchaete diplosiphon (Fremyella diplosiphon).